We begin with the raw amino-acid sequence, 413 residues long: Phosphoglycerate kinase (413 aa).

Substrate contacts are provided by residues 24–26 (DFN), Arg39, 62–65 (HLSR), Arg123, and Arg165. ATP contacts are provided by residues Lys216, Glu343, and 369-372 (GGDS).

Belongs to the phosphoglycerate kinase family. In terms of assembly, monomer.

It localises to the cytoplasm. The enzyme catalyses (2R)-3-phosphoglycerate + ATP = (2R)-3-phospho-glyceroyl phosphate + ADP. The protein operates within carbohydrate degradation; glycolysis; pyruvate from D-glyceraldehyde 3-phosphate: step 2/5. The polypeptide is Phosphoglycerate kinase (Mycoplasmoides gallisepticum (strain R(low / passage 15 / clone 2)) (Mycoplasma gallisepticum)).